A 211-amino-acid chain; its full sequence is MNFVIYGVIVVLTSQLYVDGWGCQMSERGLDKKMKNKILKHHNELRQKVANGQERGQPTASNMKQLRWNDELAANAQRAAERCIFQHTSDEGRKTTKYGVAGESMYAGTFSNPLKTAVDMWYEEVRDVNPSILDSYDYYPGAVIGHYIQLVWAETEAIGCGYAKSAADGESYVFCHYAPHGLFPQQSVYKRGSPASACKKGQSSRYPGLCK.

The signal sequence occupies residues 1-20 (MNFVIYGVIVVLTSQLYVDG).

Post-translationally, contains 3 disulfide bonds. In terms of tissue distribution, expressed by the venom gland.

The protein resides in the secreted. Functionally, shows trypsin inhibiting activity. The protein is highly thermally stable, since its incubation in boiling water during 10 minutes does not reduce its activity. The protein is Scoloptoxin SSD43 of Scolopendra dehaani (Thai centipede).